Here is a 402-residue protein sequence, read N- to C-terminus: uncharacterized protein (402 aa).

Transmembrane regions (helical) follow at residues 23–43 (IVSV…PLAV), 52–72 (LGYG…ATLL), 90–110 (VLYG…SVAI), 121–141 (LLVG…AAIG), 158–178 (WNGI…VLLV), 180–200 (WLGL…GFAL), 228–248 (GMGL…ITLY), 255–275 (ANAV…RLLF), 282–302 (LGGF…LLLL), 309–329 (WVGL…FPAF), 351–371 (LFVD…ANLF), and 375–395 (SMFL…IALH).

Belongs to the major facilitator superfamily. YhhS family.

It is found in the cell inner membrane. This is an uncharacterized protein from Pseudomonas aeruginosa (strain UCBPP-PA14).